Here is a 289-residue protein sequence, read N- to C-terminus: Iodotyrosine deiodinase 1 (289 aa).

Residues 1 to 21 (MYFLTPILVAILCILVVWIFK) form a helical membrane-spanning segment. Positions 29-58 (KKKGEPRTRAEARPWVDEDLKDSSDLHQAE) are enriched in basic and acidic residues. The tract at residues 29–69 (KKKGEPRTRAEARPWVDEDLKDSSDLHQAEEDADEWQESEE) is disordered. Residues 59–69 (EDADEWQESEE) show a composition bias toward acidic residues. Residues 100–104 (RRSVR), S128, and 128–129 (SG) contribute to the FMN site. 3-iodo-L-tyrosine is bound by residues A130, E157, Y161, and K182. Residues 237-239 (TTT) and R279 contribute to the FMN site.

This sequence belongs to the nitroreductase family. Homodimer. Requires FMN as cofactor. Expressed at a high level in thyroid gland (at protein level). Expressed at a high level in thyroid gland and at lower level in kidney and trachea.

The protein resides in the cell membrane. The protein localises to the cytoplasmic vesicle membrane. The enzyme catalyses 2 iodide + L-tyrosine + 2 NADP(+) = 3,5-diiodo-L-tyrosine + 2 NADPH + H(+). It catalyses the reaction iodide + L-tyrosine + NADP(+) = 3-iodo-L-tyrosine + NADPH. The catalysed reaction is 3-iodo-L-tyrosine + iodide + NADP(+) = 3,5-diiodo-L-tyrosine + NADPH + H(+). It carries out the reaction L-tyrosine + chloride + NADP(+) = 3-chloro-L-tyrosine + NADPH. The enzyme catalyses bromide + L-tyrosine + NADP(+) = 3-bromo-L-tyrosine + NADPH. In terms of biological role, catalyzes the dehalogenation of halotyrosines such as 3-bromo-L-tyrosine, 3-chloro-L-tyrosine, 3-iodo-L-tyrosine and 3,5-diiodo-L-tyrosine. During thyroid hormone biosynthesis, facilitates iodide salvage by catalysing the oxidative NADPH-dependent deiodination of the halogenated by-products of thyroid hormone production, monoiodotyrosine (L-MIT) and diiodotyrosine (L-DIT). The scavanged iodide can then reenter the hormone-producing pathways. Acts more efficiently on 3-iodo-L-tyrosine than 3,5-diiodo-L-tyrosine. In Homo sapiens (Human), this protein is Iodotyrosine deiodinase 1.